A 509-amino-acid chain; its full sequence is Kynureninase 1 (509 aa).

Pyridoxal 5'-phosphate is bound by residues Leu-169, Thr-170, 197–200, Asp-283, His-286, and Tyr-308; that span reads FPSD. Position 309 is an N6-(pyridoxal phosphate)lysine (Lys-309). Pyridoxal 5'-phosphate is bound by residues Trp-349 and Asn-377.

It belongs to the kynureninase family. Homodimer. It depends on pyridoxal 5'-phosphate as a cofactor.

Its subcellular location is the cytoplasm. The catalysed reaction is L-kynurenine + H2O = anthranilate + L-alanine + H(+). The enzyme catalyses 3-hydroxy-L-kynurenine + H2O = 3-hydroxyanthranilate + L-alanine + H(+). Its pathway is amino-acid degradation; L-kynurenine degradation; L-alanine and anthranilate from L-kynurenine: step 1/1. It participates in cofactor biosynthesis; NAD(+) biosynthesis; quinolinate from L-kynurenine: step 2/3. Catalyzes the cleavage of L-kynurenine (L-Kyn) and L-3-hydroxykynurenine (L-3OHKyn) into anthranilic acid (AA) and 3-hydroxyanthranilic acid (3-OHAA), respectively. This Aspergillus fumigatus (strain CBS 144.89 / FGSC A1163 / CEA10) (Neosartorya fumigata) protein is Kynureninase 1 (bna5-1).